The chain runs to 372 residues: N-methyl-L-tryptophan oxidase (372 aa).

4–34 (DLIIIGSGSVGAAAGYYATRAGLNVLMTDAH) lines the FAD pocket. Cys308 carries the S-8alpha-FAD cysteine modification.

It belongs to the MSOX/MTOX family. MTOX subfamily. As to quaternary structure, monomer. Requires FAD as cofactor.

It catalyses the reaction N(alpha)-methyl-L-tryptophan + O2 + H2O = L-tryptophan + formaldehyde + H2O2. Functionally, catalyzes the oxidative demethylation of N-methyl-L-tryptophan. The chain is N-methyl-L-tryptophan oxidase from Shigella flexneri serotype 5b (strain 8401).